The primary structure comprises 634 residues: tRNA uridine 5-carboxymethylaminomethyl modification enzyme MnmG (634 aa).

Residue 14–19 (GGGHAG) participates in FAD binding. 279–293 (GPRYCPSIEDKVVRF) contributes to the NAD(+) binding site.

The protein belongs to the MnmG family. In terms of assembly, homodimer. Heterotetramer of two MnmE and two MnmG subunits. It depends on FAD as a cofactor.

The protein resides in the cytoplasm. In terms of biological role, NAD-binding protein involved in the addition of a carboxymethylaminomethyl (cmnm) group at the wobble position (U34) of certain tRNAs, forming tRNA-cmnm(5)s(2)U34. The sequence is that of tRNA uridine 5-carboxymethylaminomethyl modification enzyme MnmG from Xanthomonas campestris pv. campestris (strain 8004).